A 519-amino-acid polypeptide reads, in one-letter code: Halolysin (519 aa).

The segment at residues 1 to 27 is a signal peptide (tat-type signal); that stretch reads MAGTPNFDRRSFLRLAAAAGLTGMAGV. The propeptide occupies 28-116; sequence TSATPGRSPG…AEKNATHEAL (89 aa). The Peptidase S8 domain occupies 127 to 400; that stretch reads QYAPQQVNAD…SGRVDAANAV (274 aa). Active-site charge relay system residues include aspartate 154, histidine 193, and serine 347. Residues 386 to 425 form a disordered region; sequence STKQGSGRVDAANAVTTDPGDGGGGGGGGSKETTYDGTLS. The span at 405-415 shows a compositional bias: gly residues; that stretch reads GDGGGGGGGGS.

This sequence belongs to the peptidase S8 family. Predicted to be exported by the Tat system. The position of the signal peptide cleavage has not been experimentally proven.

The protein localises to the secreted. Its function is as follows. Probable secreted halophilic serine protease showing proteolytic activity toward the protease general substrate azocasein. The chain is Halolysin (hly) from Haloferax mediterranei (strain ATCC 33500 / DSM 1411 / JCM 8866 / NBRC 14739 / NCIMB 2177 / R-4) (Halobacterium mediterranei).